We begin with the raw amino-acid sequence, 216 residues long: Thymidylate kinase (216 aa).

Position 10-17 (10-17) interacts with ATP; sequence GVDGSGKT.

Belongs to the thymidylate kinase family.

The catalysed reaction is dTMP + ATP = dTDP + ADP. Phosphorylation of dTMP to form dTDP in both de novo and salvage pathways of dTTP synthesis. The chain is Thymidylate kinase from Pelotomaculum thermopropionicum (strain DSM 13744 / JCM 10971 / SI).